Consider the following 241-residue polypeptide: MTLQWAAVATFLYAEIGLILIFCLPFIPPQRWQKIFSFNVWGKIATFWNKAFLTIIILLIVLFLDAVREVRKYSSVHTIEKSSTSRPDAYEHTQMKLFRSQRNLYISGFSLFFWLVLRRLVTLITQLAKELSNKGVLKTQAENTNKAAKKFMEENEKLKRILKSHGKDEECVLEAENKKLVEDQEKLKTELRKTSDALSKAQNDVMEMKMQSERLSKEYDQLLKEHSELQDRLERGNKKRL.

Residues 1 to 6 (MTLQWA) lie on the Lumenal side of the membrane. A helical membrane pass occupies residues 7-27 (AVATFLYAEIGLILIFCLPFI). Over 28–43 (PPQRWQKIFSFNVWGK) the chain is Cytoplasmic. The chain crosses the membrane as a helical span at residues 44-64 (IATFWNKAFLTIIILLIVLFL). The Lumenal portion of the chain corresponds to 65–103 (DAVREVRKYSSVHTIEKSSTSRPDAYEHTQMKLFRSQRN). A helical transmembrane segment spans residues 104 to 124 (LYISGFSLFFWLVLRRLVTLI). Over 125–241 (TQLAKELSNK…RLERGNKKRL (117 aa)) the chain is Cytoplasmic. A coiled-coil region spans residues 166 to 233 (GKDEECVLEA…KEHSELQDRL (68 aa)). The interval 198 to 223 (LSKAQNDVMEMKMQSERLSKEYDQLL) is disordered. The span at 206 to 223 (MEMKMQSERLSKEYDQLL) shows a compositional bias: basic and acidic residues. The short motif at 238-241 (KKRL) is the Di-lysine motif element.

It belongs to the BCAP29/BCAP31 family. Homodimer. Heterodimer with BCAP31. Binds CASP8 (isoform 9) as a complex containing BCAP31, BCAP29, BCL2 and/or BCL2L1. Interacts with VAMP3, VAMP1 and membrane IgD immunoglobulins. May interact with ACTG1 and non-muscle myosin II.

It is found in the endoplasmic reticulum membrane. In terms of biological role, may play a role in anterograde transport of membrane proteins from the endoplasmic reticulum to the Golgi. May be involved in CASP8-mediated apoptosis. This Homo sapiens (Human) protein is B-cell receptor-associated protein 29 (BCAP29).